A 79-amino-acid chain; its full sequence is Cyclotide phyb-A (79 aa).

Positions Met-1–Thr-43 are excised as a propeptide. Positions Gly-44–Asn-73 form a cross-link, cyclopeptide (Gly-Asn). Disulfide bonds link Cys-47–Cys-63, Cys-51–Cys-65, and Cys-56–Cys-70. Residues Gly-74–Lys-79 constitute a propeptide that is removed on maturation.

In terms of processing, this is a cyclic peptide. Contains 3 disulfide bonds. As to expression, expressed in midvein, lamina and periphery of leaves (at protein level).

Its function is as follows. Probably participates in a plant defense mechanism. In Petunia hybrida (Petunia), this protein is Cyclotide phyb-A.